A 141-amino-acid polypeptide reads, in one-letter code: Large ribosomal subunit protein uL11 (141 aa).

Belongs to the universal ribosomal protein uL11 family. Part of the ribosomal stalk of the 50S ribosomal subunit. Interacts with L10 and the large rRNA to form the base of the stalk. L10 forms an elongated spine to which L12 dimers bind in a sequential fashion forming a multimeric L10(L12)X complex. One or more lysine residues are methylated.

Functionally, forms part of the ribosomal stalk which helps the ribosome interact with GTP-bound translation factors. This Chlorobaculum tepidum (strain ATCC 49652 / DSM 12025 / NBRC 103806 / TLS) (Chlorobium tepidum) protein is Large ribosomal subunit protein uL11.